A 353-amino-acid polypeptide reads, in one-letter code: Mas-related G-protein coupled receptor member B5 (353 aa).

Over 1–67 the chain is Extracellular; it reads MPDSPTESYG…SCIITFNTLN (67 aa). 2 N-linked (GlcNAc...) asparagine glycosylation sites follow: asparagine 26 and asparagine 44. Residues 68 to 90 form a helical membrane-spanning segment; sequence FLTATISVVGTAGNATVLRLLGF. Residues 91–96 are Cytoplasmic-facing; that stretch reads HMHRYA. Residues 97-117 traverse the membrane as a helical segment; sequence FSVYVFNLAGADFLYLCTQTV. The Extracellular portion of the chain corresponds to 118-131; sequence YSLECVLQFDNSYF. A helical transmembrane segment spans residues 132–152; sequence YFLLTILMFAYLAALCMIPAI. Over 153–180 the chain is Cytoplasmic; it reads STERCLSVTWPIWYHCQRPRHTSATVCA. Residues 181–201 traverse the membrane as a helical segment; sequence LFWAFSLLLRLLLGQGCGFLF. Residues 202 to 213 lie on the Extracellular side of the membrane; sequence GKYDYYFCRYCS. The helical transmembrane segment at 214–234 threads the bilayer; that stretch reads FITTAFLIVLFVVPFVSSLAM. Residues 235 to 253 are Cytoplasmic-facing; it reads LTKIICGSHRIPVTRFYVT. A helical transmembrane segment spans residues 254–274; the sequence is IAVTVLVFTFFGLPVGIISLL. The Extracellular portion of the chain corresponds to 275–289; it reads LPRIVVFRGVFYIYK. A helical transmembrane segment spans residues 290–310; sequence IVTFLYSVNCCANPIIYFLIG. The Cytoplasmic portion of the chain corresponds to 311-353; sequence SIRHHRLQRQSLKLLLQRAMQDTPEEEGGVKGPSQKSNELEIV. The segment at 333 to 353 is disordered; it reads TPEEEGGVKGPSQKSNELEIV.

The protein belongs to the G-protein coupled receptor 1 family. Mas subfamily. As to expression, expressed strongly in newborn dorsal root ganglia, adult dorsal root ganglia and trigeminal ganlia.

It localises to the membrane. Functionally, orphan receptor. Probably involved in the function of nociceptive neurons. May regulate nociceptor function and/or development, including the sensation or modulation of pain. The chain is Mas-related G-protein coupled receptor member B5 (Mrgprb5) from Rattus norvegicus (Rat).